The chain runs to 238 residues: Uridylate kinase (238 aa).

12 to 15 (KLSG) is an ATP binding site. UMP is bound at residue G54. ATP-binding residues include G55 and R59. UMP contacts are provided by residues D74 and 135–142 (TGNPYFTT). 3 residues coordinate ATP: T162, Y168, and D171.

Belongs to the UMP kinase family. Homohexamer.

It localises to the cytoplasm. The catalysed reaction is UMP + ATP = UDP + ADP. The protein operates within pyrimidine metabolism; CTP biosynthesis via de novo pathway; UDP from UMP (UMPK route): step 1/1. Its activity is regulated as follows. Inhibited by UTP. Catalyzes the reversible phosphorylation of UMP to UDP. In Nitratidesulfovibrio vulgaris (strain ATCC 29579 / DSM 644 / CCUG 34227 / NCIMB 8303 / VKM B-1760 / Hildenborough) (Desulfovibrio vulgaris), this protein is Uridylate kinase.